The following is a 573-amino-acid chain: Sulfate adenylyltransferase (573 aa).

The N-terminal stretch occupies residues M1–Y169. The catalytic stretch occupies residues D170–T394. Position 197 (Q197) interacts with sulfate. ATP contacts are provided by residues Q197–N200 and G291–H294. Active-site residues include T198, R199, and N200. R199 provides a ligand contact to sulfate. A295 provides a ligand contact to sulfate. ATP is bound at residue V333. An allosteric regulation domain; adenylyl-sulfate kinase-like region spans residues Q395 to A573. Residues D434 to R437, R451, I477 to A478, and R515 each bind 3'-phosphoadenylyl sulfate.

It in the N-terminal section; belongs to the sulfate adenylyltransferase family. This sequence in the C-terminal section; belongs to the APS kinase family. Homohexamer. Dimer of trimers.

It is found in the cytoplasm. It catalyses the reaction sulfate + ATP + H(+) = adenosine 5'-phosphosulfate + diphosphate. The protein operates within sulfur metabolism; hydrogen sulfide biosynthesis; sulfite from sulfate: step 1/3. Its activity is regulated as follows. Allosterically inhibited by 3'-phosphoadenosine 5'-phosphosulfate (PAPS). Catalyzes the first intracellular reaction of sulfate assimilation, forming adenosine-5'-phosphosulfate (APS) from inorganic sulfate and ATP. Plays an important role in sulfate activation as a component of the biosynthesis pathway of sulfur-containing amino acids. The chain is Sulfate adenylyltransferase from Aspergillus oryzae (strain ATCC 42149 / RIB 40) (Yellow koji mold).